Consider the following 407-residue polypeptide: (R)-phenyllactyl-CoA dehydratase alpha subunit (407 aa).

Positions 1–4 are excised as a propeptide; it reads MSDR.

The protein belongs to the FldB/FldC dehydratase alpha/beta subunit family. In terms of assembly, part of the heterotrimeric phenyllactate dehydratase complex FldABC, composed of (R)-phenyllactate CoA-transferase (FldA) and a heterodimeric (R)-phenyllactyl-CoA dehydratase (FldB and FldC). [4Fe-4S] cluster is required as a cofactor. It depends on No flavin could be detected in the FldABC complex, and the addition of FAD, FMN or riboflavin to the dehydratase do not increase enzymatic activity. as a cofactor.

It catalyses the reaction (R)-3-phenyllactoyl-CoA = (E)-cinnamoyl-CoA + H2O. It carries out the reaction (R)-3-(4-hydroxyphenyl)lactoyl-CoA = (E)-4-coumaroyl-CoA + H2O. The catalysed reaction is (R)-3-(indol-3-yl)lactoyl-CoA = (E)-3-(indol-3-yl)acryloyl-CoA + H2O. The protein operates within amino-acid degradation; L-phenylalanine degradation. Its function is as follows. Component of the phenyllactate dehydratase complex FldABC that is involved in the fermentation of L-phenylalanine via a Stickland reaction. This complex catalyzes the reversible syn-dehydration of (R)-phenyllactate to (E)-cinnamate in two steps, a CoA-transfer from cinnamoyl-CoA to phenyllactate, catalyzed by FldA, followed by the dehydration of phenyllactyl-CoA to cinnamoyl-CoA, catalyzed by FldB and FldC. Requires the activator FldI to initiate catalysis. The sequence is that of (R)-phenyllactyl-CoA dehydratase alpha subunit from Clostridium sporogenes.